Consider the following 270-residue polypeptide: NFAT activation molecule 1 (270 aa).

An N-terminal signal peptide occupies residues 1 to 42; sequence MENQPVRWRALPGLPRPPGLPAAPWLLLGVLLLPGTLRLAGG. Topologically, residues 43-163 are extracellular; sequence QSVTHTGLPI…YREPPQSPQK (121 aa). Residues 50-150 enclose the Ig-like V-type domain; the sequence is LPIMASLANT…RGSGTFILVR (101 aa). C65 and C114 are oxidised to a cystine. An N-linked (GlcNAc...) asparagine glycan is attached at N107. Residues 164-184 form a helical membrane-spanning segment; sequence LLLFGFTGLLSVLSVVGTALL. Over 185 to 270 the chain is Cytoplasmic; it reads LWNKKRMRGP…GELNLVYENL (86 aa). The disordered stretch occupies residues 190 to 219; the sequence is RMRGPGKDPTRKCPDPRSASSPKQHPSESV. Residues 194–204 show a composition bias toward basic and acidic residues; the sequence is PGKDPTRKCPD. A compositionally biased stretch (polar residues) spans 207–219; it reads SASSPKQHPSESV. Residues 209–237 form the ITAM domain; the sequence is SSPKQHPSESVYTALQRRETEVYACIENE. Y220 and Y231 each carry phosphotyrosine. Residues 234–262 are disordered; the sequence is IENEDGSSPTAKQSPLSQERPHRFEDDGE. A compositionally biased stretch (polar residues) spans 239-250; that stretch reads GSSPTAKQSPLS.

As to quaternary structure, no direct interaction with the B-cell antigen receptor (BCR). Interacts with SYK; probably involved in BCR signaling. Interacts with ZAP70. Post-translationally, N-glycosylated. In terms of tissue distribution, highly expressed in neutrophils, primary monocytes, mast cells, monocytic cell lines and lymphocytes. Also expressed in spleen B and T-cells, and lung. Expressed at low level in non-immune tissue.

The protein localises to the cell membrane. In terms of biological role, may function in immune system as a receptor which activates via the calcineurin/NFAT-signaling pathway the downstream cytokine gene promoters. Activates the transcription of IL-13 and TNF-alpha promoters. May be involved in the regulation of B-cell, but not T-cell, development. Overexpression activates downstream effectors without ligand binding or antibody cross-linking. The polypeptide is NFAT activation molecule 1 (NFAM1) (Homo sapiens (Human)).